A 567-amino-acid polypeptide reads, in one-letter code: Urease subunit alpha (567 aa).

Residues 129-567 enclose the Urease domain; that stretch reads GGIDTHIHWI…LPMAQRYFLF (439 aa). Residues His-134, His-136, and Lys-217 each contribute to the Ni(2+) site. Lys-217 is subject to N6-carboxylysine. His-219 serves as a coordination point for substrate. Ni(2+) contacts are provided by His-246 and His-272. His-320 (proton donor) is an active-site residue. A Ni(2+)-binding site is contributed by Asp-360.

This sequence belongs to the metallo-dependent hydrolases superfamily. Urease alpha subunit family. As to quaternary structure, heterotrimer of UreA (gamma), UreB (beta) and UreC (alpha) subunits. Three heterotrimers associate to form the active enzyme. Ni cation is required as a cofactor. Carboxylation allows a single lysine to coordinate two nickel ions.

Its subcellular location is the cytoplasm. It catalyses the reaction urea + 2 H2O + H(+) = hydrogencarbonate + 2 NH4(+). It participates in nitrogen metabolism; urea degradation; CO(2) and NH(3) from urea (urease route): step 1/1. This chain is Urease subunit alpha, found in Enterobacter sp. (strain 638).